The chain runs to 241 residues: Probable 2-phosphosulfolactate phosphatase (241 aa).

It belongs to the ComB family. The cofactor is Mg(2+).

It catalyses the reaction (2R)-O-phospho-3-sulfolactate + H2O = (2R)-3-sulfolactate + phosphate. The sequence is that of Probable 2-phosphosulfolactate phosphatase from Deinococcus geothermalis (strain DSM 11300 / CIP 105573 / AG-3a).